We begin with the raw amino-acid sequence, 116 residues long: Large ribosomal subunit protein bL19 (116 aa).

The protein belongs to the bacterial ribosomal protein bL19 family.

Functionally, this protein is located at the 30S-50S ribosomal subunit interface and may play a role in the structure and function of the aminoacyl-tRNA binding site. The protein is Large ribosomal subunit protein bL19 of Flavobacterium johnsoniae (strain ATCC 17061 / DSM 2064 / JCM 8514 / BCRC 14874 / CCUG 350202 / NBRC 14942 / NCIMB 11054 / UW101) (Cytophaga johnsonae).